The following is a 431-amino-acid chain: 5-methylthioadenosine/S-adenosylhomocysteine deaminase (431 aa).

H66 and H68 together coordinate Zn(2+). E95, R147, and H185 together coordinate substrate. A Zn(2+)-binding site is contributed by H212. Substrate contacts are provided by E215 and D300. D300 is a Zn(2+) binding site.

This sequence belongs to the metallo-dependent hydrolases superfamily. MTA/SAH deaminase family. Requires Zn(2+) as cofactor.

The enzyme catalyses S-adenosyl-L-homocysteine + H2O + H(+) = S-inosyl-L-homocysteine + NH4(+). The catalysed reaction is S-methyl-5'-thioadenosine + H2O + H(+) = S-methyl-5'-thioinosine + NH4(+). Its function is as follows. Catalyzes the deamination of 5-methylthioadenosine and S-adenosyl-L-homocysteine into 5-methylthioinosine and S-inosyl-L-homocysteine, respectively. Is also able to deaminate adenosine. This is 5-methylthioadenosine/S-adenosylhomocysteine deaminase from Desulfitobacterium hafniense (strain Y51).